A 234-amino-acid polypeptide reads, in one-letter code: Demethylmenaquinone methyltransferase (234 aa).

S-adenosyl-L-methionine contacts are provided by residues Thr-58, Asp-79, and Asn-106–Ala-107.

It belongs to the class I-like SAM-binding methyltransferase superfamily. MenG/UbiE family.

The catalysed reaction is a 2-demethylmenaquinol + S-adenosyl-L-methionine = a menaquinol + S-adenosyl-L-homocysteine + H(+). It participates in quinol/quinone metabolism; menaquinone biosynthesis; menaquinol from 1,4-dihydroxy-2-naphthoate: step 2/2. Methyltransferase required for the conversion of demethylmenaquinol (DMKH2) to menaquinol (MKH2). The protein is Demethylmenaquinone methyltransferase of Bacillus pumilus (strain SAFR-032).